Reading from the N-terminus, the 450-residue chain is MTKYFGTDGVRGVANLELSPEMAFKLGRAGGYVLTKHADKNQRPKVLVARDTRISGQMLEQSLISGLLSVGIEVLSLGVITTPAVAYLIKVQEASAGIMISASHNPAIYNGIKFFGADGYKLPDATEEEIEAILDAPEDILPRPEGEGLGTVEEYPEGALKYTQFLEHTIPDDLEGLKVAVDGANGSTSGLISRVFADLETDFTTTATHPNGLNINDGVGSTHPENLVKKVLESGADMGLAFDGDGDRCIAVDELGNIIDGDKIMFILGHYLSEKGRLKQDTIVTTVMSNIGLYKAIEANGMKSAQTDVGDRHVVEEMREKGFNLGGEQSGHIIIFDYHNTGDGMLTGIQLMNVMKQTGKKLSELAAPVQTYPQKLVNLTVKDKDAWLTNDKIQAAIDTVEKEMNGDGRVLVRPSGTEPLLRVMCEAATEEKVNQYADQIAAVVQSEIGE.

The active-site Phosphoserine intermediate is the Ser103. Mg(2+) contacts are provided by Ser103, Asp243, Asp245, and Asp247. Phosphoserine is present on Ser103.

It belongs to the phosphohexose mutase family. Requires Mg(2+) as cofactor. Activated by phosphorylation.

The enzyme catalyses alpha-D-glucosamine 1-phosphate = D-glucosamine 6-phosphate. Catalyzes the conversion of glucosamine-6-phosphate to glucosamine-1-phosphate. In Latilactobacillus sakei subsp. sakei (strain 23K) (Lactobacillus sakei subsp. sakei), this protein is Phosphoglucosamine mutase.